The following is a 265-amino-acid chain: Early E4 31 kDa protein (265 aa).

It belongs to the adenoviridae E4 30 to 34 kDa protein family. In terms of assembly, interacts with E1B-55k.

The protein resides in the host nucleus. Its subcellular location is the host cytoplasm. In terms of biological role, plays a major role to prevent cellular inhibition of viral genome replication by nuclear bodies. Assembles an SCF-like E3 ubiquitin ligase complex based on the cellular proteins ELOB, ELOC, CUL5 and RBX1, in cooperation with viral E1B-55K. This viral RING-type ligase ubiquitinates cellular substrates prior to proteasomal degradation: p53/TP53, LIG4, MRE11-RAD50-NBS1 (MRN) complex, ITGA3, DAXX and BLM. This is Early E4 31 kDa protein from Canis lupus familiaris (Dog).